The sequence spans 462 residues: Violaxanthin de-epoxidase, chloroplastic (462 aa).

Cys-231 and Cys-362 form a disulfide bridge. The stretch at 372 to 437 (IEKTVEEGER…RELSKEEMEF (66 aa)) forms a coiled coil. The segment at 380–391 (ERIIVKEVEEIE) is involved in the binding to the thylakoid membrane.

This sequence belongs to the calycin superfamily. Lipocalin family. Interacts in vitro with LTO1.

The protein resides in the plastid. It localises to the chloroplast thylakoid membrane. It catalyses the reaction all-trans-violaxanthin + 2 L-ascorbate = all-trans-zeaxanthin + 2 L-dehydroascorbate + 2 H2O. Activity limited by low ascorbate availability. Feedback inhibition by zeaxanthin. Requires the presence of micelle-forming lipids such as monogalactosyldiacylglyceride (MGDG). Low concentration of bilayer forming lipids, such as digalactosyldiacylglyceride (DGDG) or phosphatidylcholine, supports a slower but nearly complete activity. 80% of the specific activity in lumenal chloroplast fractions is lost in vitro in the presence of reduced thioredoxin. Its function is as follows. Part of the xanthophyll (or violaxanthin) cycle for controlling the concentration of zeaxanthin in chloroplasts. Catalyzes the two-step mono de-epoxidation reaction. Stereospecific for all-trans xanthophylls. Zeaxanthin induces the dissipation of excitation energy in the chlorophyll of the light-harvesting protein complex of photosystem II. This chain is Violaxanthin de-epoxidase, chloroplastic, found in Arabidopsis thaliana (Mouse-ear cress).